A 109-amino-acid polypeptide reads, in one-letter code: uncharacterized protein (109 aa).

The helical transmembrane segment at 90–107 (IICNFWGSLLGVGIAFYQ) threads the bilayer.

Its subcellular location is the membrane. This is an uncharacterized protein from Saccharomyces cerevisiae (strain ATCC 204508 / S288c) (Baker's yeast).